The following is an 879-amino-acid chain: Translation initiation factor IF-2 (879 aa).

The disordered stretch occupies residues 48–261 (EAFPPPPEPA…RPHKSKKQRR (214 aa)). Low complexity predominate over residues 82-111 (PAADAAAPPAVTTPPSAAPAGATTSAPSDA). 3 stretches are compositionally biased toward pro residues: residues 119–142 (PPRPVKLPQPPRPAPAVPKPPSGP), 152–163 (SPMPRPMPPRPV), and 173–197 (PGIPRPPLRPGAPGRPTPGAMPPRP). Residues 198–213 (AAGRAAPGRGAPIRLP) show a composition bias toward low complexity. A compositionally biased stretch (gly residues) spans 228-246 (PGVGGRGRGAPGGAFGRGP). Positions 251–260 (SRPHKSKKQR) are enriched in basic residues. The 172-residue stretch at 372-543 (PRPPVVTVMG…AILLTADAAL (172 aa)) folds into the tr-type G domain. Positions 381-388 (GHVDHGKT) are G1. GTP is bound at residue 381–388 (GHVDHGKT). Residues 406-410 (GITQH) form a G2 region. The tract at residues 431–434 (DTPG) is G3. GTP-binding positions include 431 to 435 (DTPGH) and 485 to 488 (NKID). The interval 485–488 (NKID) is G4. A G5 region spans residues 521 to 523 (SAL).

This sequence belongs to the TRAFAC class translation factor GTPase superfamily. Classic translation factor GTPase family. IF-2 subfamily.

It localises to the cytoplasm. In terms of biological role, one of the essential components for the initiation of protein synthesis. Protects formylmethionyl-tRNA from spontaneous hydrolysis and promotes its binding to the 30S ribosomal subunits. Also involved in the hydrolysis of GTP during the formation of the 70S ribosomal complex. The protein is Translation initiation factor IF-2 of Acidothermus cellulolyticus (strain ATCC 43068 / DSM 8971 / 11B).